The sequence spans 919 residues: Hexon protein (919 aa).

Ala-2 carries the N-acetylalanine; by host modification. Residue Tyr-907 is modified to Phosphotyrosine; by host.

It belongs to the adenoviridae hexon protein family. Homotrimer. Interacts with the capsid vertex protein; this interaction binds the peripentonal hexons to the neighboring penton base. Interacts with the hexon-linking protein; this interaction tethers the hexons surrounding the penton to those situated in the central plate of the facet. Interacts with the hexon-interlacing protein; this interaction lashes the hexons together. Interacts with host dyneins DYNC1LI1 and DYNC1I2; this interaction might be involved in intracellular microtubule-dependent transport of incoming viral capsid. Interacts with the shutoff protein; this interaction allows folding and formation of hexons trimers. Interacts with pre-protein VI; this interaction probably allows nuclear import of hexon trimers and possibly pre-capsid assembly.

Its subcellular location is the virion. The protein localises to the host nucleus. In terms of biological role, major capsid protein that self-associates to form 240 hexon trimers, each in the shape of a hexagon, building most of the pseudo T=25 capsid. Assembled into trimeric units with the help of the chaperone shutoff protein. Transported by pre-protein VI to the nucleus where it associates with other structural proteins to form an empty capsid. Might be involved, through its interaction with host dyneins, in the intracellular microtubule-dependent transport of incoming viral capsid to the nucleus. The protein is Hexon protein of Human adenovirus A serotype 12 (HAdV-12).